A 486-amino-acid polypeptide reads, in one-letter code: UDP-N-acetylmuramoyl-L-alanyl-D-glutamate--2,6-diaminopimelate ligase (486 aa).

S34 contributes to the UDP-N-acetyl-alpha-D-muramoyl-L-alanyl-D-glutamate binding site. An ATP-binding site is contributed by 112–118 (GTAGKTS). UDP-N-acetyl-alpha-D-muramoyl-L-alanyl-D-glutamate is bound by residues 154–155 (TT), S181, Q187, and R189. K221 carries the post-translational modification N6-carboxylysine. Residues R385, 409–412 (DNPR), G457, and E461 each bind meso-2,6-diaminopimelate. Positions 409 to 412 (DNPR) match the Meso-diaminopimelate recognition motif motif.

Belongs to the MurCDEF family. MurE subfamily. Requires Mg(2+) as cofactor. In terms of processing, carboxylation is probably crucial for Mg(2+) binding and, consequently, for the gamma-phosphate positioning of ATP.

Its subcellular location is the cytoplasm. The catalysed reaction is UDP-N-acetyl-alpha-D-muramoyl-L-alanyl-D-glutamate + meso-2,6-diaminopimelate + ATP = UDP-N-acetyl-alpha-D-muramoyl-L-alanyl-gamma-D-glutamyl-meso-2,6-diaminopimelate + ADP + phosphate + H(+). It participates in cell wall biogenesis; peptidoglycan biosynthesis. Its function is as follows. Catalyzes the addition of meso-diaminopimelic acid to the nucleotide precursor UDP-N-acetylmuramoyl-L-alanyl-D-glutamate (UMAG) in the biosynthesis of bacterial cell-wall peptidoglycan. This is UDP-N-acetylmuramoyl-L-alanyl-D-glutamate--2,6-diaminopimelate ligase from Rhizobium meliloti (strain 1021) (Ensifer meliloti).